The sequence spans 146 residues: D-aminoacyl-tRNA deacylase (146 aa).

The Gly-cisPro motif, important for rejection of L-amino acids signature appears at 137 to 138 (GP).

The protein belongs to the DTD family. In terms of assembly, homodimer.

The protein localises to the cytoplasm. The catalysed reaction is glycyl-tRNA(Ala) + H2O = tRNA(Ala) + glycine + H(+). The enzyme catalyses a D-aminoacyl-tRNA + H2O = a tRNA + a D-alpha-amino acid + H(+). An aminoacyl-tRNA editing enzyme that deacylates mischarged D-aminoacyl-tRNAs. Also deacylates mischarged glycyl-tRNA(Ala), protecting cells against glycine mischarging by AlaRS. Acts via tRNA-based rather than protein-based catalysis; rejects L-amino acids rather than detecting D-amino acids in the active site. By recycling D-aminoacyl-tRNA to D-amino acids and free tRNA molecules, this enzyme counteracts the toxicity associated with the formation of D-aminoacyl-tRNA entities in vivo and helps enforce protein L-homochirality. The protein is D-aminoacyl-tRNA deacylase of Bacillus mycoides (strain KBAB4) (Bacillus weihenstephanensis).